The chain runs to 171 residues: Transcription antitermination protein NusB (171 aa).

It belongs to the NusB family.

Functionally, involved in transcription antitermination. Required for transcription of ribosomal RNA (rRNA) genes. Binds specifically to the boxA antiterminator sequence of the ribosomal RNA (rrn) operons. This Brucella suis (strain ATCC 23445 / NCTC 10510) protein is Transcription antitermination protein NusB.